A 210-amino-acid chain; its full sequence is MTQMRFTKEDFDTFTIEGLDPRMEVLKEQVRPKLTLLGEHFAPTLSALTGDEMFPHVAKHARRSVNPPADSWVAFANSKRGYKKLPHFQIGLWDTHMFVWFAIIYESPIKEEYGRLLEAKQEDITKQIPGHFVWSPDHTKPGAYKQSDMDQEQLKTLFERLQTVKKAELLCGIQLQKEDVINMNNNEFLQTIEDAFRKLSFLYTLTQKVS.

The protein belongs to the UPF0637 family.

In Bacillus velezensis (strain DSM 23117 / BGSC 10A6 / LMG 26770 / FZB42) (Bacillus amyloliquefaciens subsp. plantarum), this protein is UPF0637 protein RBAM_014510.